Reading from the N-terminus, the 596-residue chain is Inactive metallocarboxypeptidase ecm14 (596 aa).

The first 26 residues, 1–26, serve as a signal peptide directing secretion; the sequence is MSQSHSILSSLILLVAIIFCVPHVIA. A propeptide spanning residues 27 to 190 is cleaved from the precursor; it reads VPWTTDGHAQ…SYPSMAYADA (164 aa). N-linked (GlcNAc...) asparagine glycosylation occurs at N114. In terms of domain architecture, Peptidase M14 spans 220–540; it reads NYQPLSVIIP…NVIKYFGDFL (321 aa). H285 and E288 together coordinate Zn(2+). Substrate contacts are provided by residues 285–288, R343, and 360–361; these read HARE and DR. The cysteines at positions 354 and 376 are disulfide-linked. N-linked (GlcNAc...) asparagine glycosylation occurs at N400. H416 lines the Zn(2+) pocket. Substrate is bound at residue 417–418; the sequence is SY.

Belongs to the peptidase M14 family. The cofactor is Zn(2+).

It localises to the vacuole. The protein resides in the secreted. Its function is as follows. Inactive carboxypeptidase that may play a role in cell wall organization and biogenesis. The protein is Inactive metallocarboxypeptidase ecm14 (ecm14) of Sclerotinia sclerotiorum (strain ATCC 18683 / 1980 / Ss-1) (White mold).